Consider the following 312-residue polypeptide: Fasciclin-like arabinogalactan protein elcF (312 aa).

Residues 1 to 16 form the signal peptide; that stretch reads MKLFTLLLPALTSAHS. FAS1 domains follow at residues 17 to 160 and 162 to 289; these read LSTL…NASM and LPHN…DKVL. Asn48, Asn68, Asn113, Asn157, and Asn165 each carry an N-linked (GlcNAc...) asparagine glycan.

It belongs to the fasciclin-like AGP family.

The protein operates within secondary metabolite biosynthesis. Functionally, fasciclin-like arabinogalactan protein; part of the gene cluster that mediates the biosynthesis of elsinochrome C, a perelyenequinone phytotoxin structurally similar to cercosporin. The first step of elsinochrome C biosynthesis is performed by the polyketide synthase elcA which catalyzes the formation of nor-toralactone. The starter unit acyltransferase (SAT) domain of elcA initiates polyketide extension by the selective utilization of acetyl-CoA, which is elongated to the heptaketide in the beta-ketoacyl synthase (KS) domain by successive condensations with six malonyl units introduced by the malonyl acyltransferase (MAT) domain. The product template (PT) domain catalyzes C4-C9 and C2-C11 aldol cyclizations and dehydrations to a trihydroxynaphthalene, which is thought to be delivered to the thioesterase (TE) domain for product release. The bifunctional enzyme elcB then methylates nor-toralactone to toralactone before conducting an unusual oxidative aromatic ring opening. The next step in perylenequinone biosynthesis is an O-methylation at the nascent OH-6 of the elcB product performed by the O-methyltransferase elcD. The oxidative coupling of the two monomeric naphthol units in perylenequinone biosynthesis is catalyzed by the FAD-dependent monooxygenase elcE and the multicopper oxidase elcG. ElcG might catalyze the first intermolecular coupling in a regio- and stereo-selective manner via a phenol radical coupling mechanism and the elcE could forge the second C-C bond intramolecularly via a hydride transfer mechanism. The fasciclin domain-containing protein elcF might also play a role duting this step. The last piece of the puzzle in the biosynthesis of elsinochrome C is the additional annulation by enolate coupling to afford the dihydrobenzo(ghi)perylenequinone system, catalyzed by the FAD-dependent monooxygenase elcH. This Phaeosphaeria nodorum (strain SN15 / ATCC MYA-4574 / FGSC 10173) (Glume blotch fungus) protein is Fasciclin-like arabinogalactan protein elcF.